The following is a 95-amino-acid chain: Putative regulatory protein Daud_1598 (95 aa).

Belongs to the RemA family.

This chain is Putative regulatory protein Daud_1598, found in Desulforudis audaxviator (strain MP104C).